We begin with the raw amino-acid sequence, 355 residues long: DNA polymerase IV (355 aa).

The UmuC domain maps to 6–187 (IIHVDMDAFY…LPVGKIHGVG (182 aa)). Positions 10 and 105 each coordinate Mg(2+). Glutamate 106 is an active-site residue.

Belongs to the DNA polymerase type-Y family. As to quaternary structure, monomer. The cofactor is Mg(2+).

The protein resides in the cytoplasm. The catalysed reaction is DNA(n) + a 2'-deoxyribonucleoside 5'-triphosphate = DNA(n+1) + diphosphate. Its function is as follows. Poorly processive, error-prone DNA polymerase involved in untargeted mutagenesis. Copies undamaged DNA at stalled replication forks, which arise in vivo from mismatched or misaligned primer ends. These misaligned primers can be extended by PolIV. Exhibits no 3'-5' exonuclease (proofreading) activity. May be involved in translesional synthesis, in conjunction with the beta clamp from PolIII. The protein is DNA polymerase IV of Alkalilimnicola ehrlichii (strain ATCC BAA-1101 / DSM 17681 / MLHE-1).